A 484-amino-acid polypeptide reads, in one-letter code: Replication-associated protein (484 aa).

Positions 146–153 match the Nuclear localization signal motif; sequence IRKYHQSV.

The protein localises to the host nucleus. Plays an essential for the replication of viral DNA. Presumably cleaves viral genomic dsRNA replicative form to initiate rolling circle replication. This Chaetoceros (Chaetoceros sp. DNA virus 7) protein is Replication-associated protein.